Consider the following 186-residue polypeptide: uncharacterized protein (186 aa).

A signal peptide spans 1–28; the sequence is MSVKPAALFRISAALAVAGLGASLIASA.

This is an uncharacterized protein from Rhizobium meliloti (strain 1021) (Ensifer meliloti).